Here is a 262-residue protein sequence, read N- to C-terminus: MGFLSGKRILVTGVASKLSIAYGIAQAMHREGAELAFTYQNDKLKGRVEEFAAQLGSSIVLPCDVAEDASIDAMFAELGNVWPKFDGFVHSIGFAPGDQLDGDYVNAVTREGFKVAHDISSYSFVAMAKACRTMLNPGSALLTLSYLGAERAIPNYNVMGLAKASLEANVRYMANAMGPEGVRVNAISAGPIRTLAASGIKDFRKMLAHCEAVTPIRRTVTIEDVGNSAAFLCSDLSAGISGEVVHVDGGFSIAAMNELELK.

Residues G13, 19–20 (SI), Q40, 64–65 (DV), and I92 contribute to the NAD(+) site. A substrate-binding site is contributed by A95. Catalysis depends on proton acceptor residues Y146 and Y156. Residues K163 and 192–196 (IRTLA) contribute to the NAD(+) site.

Belongs to the short-chain dehydrogenases/reductases (SDR) family. FabI subfamily. Homotetramer.

The catalysed reaction is a 2,3-saturated acyl-[ACP] + NAD(+) = a (2E)-enoyl-[ACP] + NADH + H(+). It participates in lipid metabolism; fatty acid biosynthesis. Its pathway is cofactor biosynthesis; biotin biosynthesis. Its function is as follows. Catalyzes the reduction of a carbon-carbon double bond in an enoyl moiety that is covalently linked to an acyl carrier protein (ACP). Involved in the elongation cycle of fatty acid which are used in the lipid metabolism and in the biotin biosynthesis. The polypeptide is Enoyl-[acyl-carrier-protein] reductase [NADH] FabI (fabI) (Salmonella typhimurium (strain LT2 / SGSC1412 / ATCC 700720)).